The sequence spans 314 residues: ATP synthase gamma chain (314 aa).

This sequence belongs to the ATPase gamma chain family. In terms of assembly, F-type ATPases have 2 components, CF(1) - the catalytic core - and CF(0) - the membrane proton channel. CF(1) has five subunits: alpha(3), beta(3), gamma(1), delta(1), epsilon(1). CF(0) has three main subunits: a, b and c.

The protein localises to the cellular thylakoid membrane. Functionally, produces ATP from ADP in the presence of a proton gradient across the membrane. The gamma chain is believed to be important in regulating ATPase activity and the flow of protons through the CF(0) complex. This Synechocystis sp. (strain ATCC 27184 / PCC 6803 / Kazusa) protein is ATP synthase gamma chain.